The sequence spans 409 residues: Odorant receptor 35a (409 aa).

Topologically, residues 1-35 (MVRYVPRFADGQKVKLAWPLAVFRLNHIFWPLDPS) are cytoplasmic. A helical membrane pass occupies residues 36 to 56 (TGKWGRYLDKVLAVAMSLVFM). Residues 57 to 64 (QHNDAELR) are Extracellular-facing. The helical transmembrane segment at 65-85 (YLRFEASNRNLDAFLTGMPTY) threads the bilayer. At 86-139 (LILVEAQFRSLHILLHFEKLQKFLEIFYANIYIDPRKEPEMFRKVDGKMIINRL) the chain is on the cytoplasmic side. A helical membrane pass occupies residues 140–160 (VSAMYGAVISLYLIAPVFSII). Residue asparagine 161 is glycosylated (N-linked (GlcNAc...) asparagine). At 161–177 (NQSKDFLYSMIFPFDSD) the chain is on the extracellular side. A helical transmembrane segment spans residues 178–198 (PLYIFVPLLLTNVWVGIVIDT). Residues 199–273 (MMFGETNLLC…QQLEAQYTVR (75 aa)) are Cytoplasmic-facing. Residues 274 to 294 (VFIMFAFAAGLLCALSFKAYT) form a helical membrane-spanning segment. Topologically, residues 295-302 (NPMANYIY) are extracellular. A helical transmembrane segment spans residues 303-323 (AIWFGAKTVELLSLGQIGSDL). Residues 324-379 (AFTTDSLSTMYYLTHWEQILQYSTNPSENLRLLKLINLAIEMNSKPFYVTGLKYFR) are Cytoplasmic-facing. The helical transmembrane segment at 380-400 (VSLQAGLKILQASFSYFTFLT) threads the bilayer. The Extracellular portion of the chain corresponds to 401-409 (SMQRRQMSN).

This sequence belongs to the insect chemoreceptor superfamily. Heteromeric odorant receptor channel (TC 1.A.69) family. Or1a subfamily. Interacts with Orco. Complexes exist early in the endomembrane system in olfactory sensory neurons (OSNs), coupling these complexes to the conserved ciliary trafficking pathway. As to expression, expressed in ac3B olfactory sensory neurons in the antenna.

It localises to the cell membrane. Odorant receptor which mediates acceptance or avoidance behavior, depending on its substrates. The odorant receptor repertoire encodes a large collection of odor stimuli that vary widely in identity, intensity, and duration. Forms a complex with Orco to form odorant-sensing units, providing sensitive and prolonged odorant signaling and calcium permeability. Involved in the behavioral responses to esters. Involved in the behavioral responses to butanol, pentanol, hexanol, octanol, propyl acetate, and butyl acetate. This Drosophila melanogaster (Fruit fly) protein is Odorant receptor 35a (Or35a).